Here is a 97-residue protein sequence, read N- to C-terminus: Osteocalcin (97 aa).

The signal sequence occupies residues 1 to 18 (MKTLAFLVLCSLAAICLT). Residues 19–52 (SDASTGSQPASDNPADEGMFVERDQASAVVRQKR) constitute a propeptide that is removed on maturation. The region spanning 53–93 (AAGQLSLTQLESLREVCELNLACEHMMDTEGIIAAYTAYYG) is the Gla domain. The Ca(2+) site is built by Glu-63, Glu-67, Glu-70, and Glu-76. Glu-63, Glu-67, and Glu-70 each carry 4-carboxyglutamate. Residues Cys-69 and Cys-75 are joined by a disulfide bond.

It belongs to the osteocalcin/matrix Gla protein family. Post-translationally, gamma-carboxyglutamate residues are formed by vitamin K dependent carboxylation by GGCX. These residues are essential for the binding of calcium.

It is found in the secreted. Functionally, the carboxylated form is one of the main organic components of the bone matrix, which constitutes 1-2% of the total bone protein. The carboxylated form binds strongly to apatite and calcium. This is Osteocalcin (bglap) from Sparus aurata (Gilthead sea bream).